The primary structure comprises 184 residues: Acireductone dioxygenase (184 aa).

4 residues coordinate Fe(2+): H87, H89, E93, and H137. H87, H89, E93, and H137 together coordinate Ni(2+).

It belongs to the acireductone dioxygenase (ARD) family. The cofactor is Fe(2+). Ni(2+) is required as a cofactor.

Its subcellular location is the cytoplasm. It localises to the nucleus. It catalyses the reaction 1,2-dihydroxy-5-(methylsulfanyl)pent-1-en-3-one + O2 = 4-methylsulfanyl-2-oxobutanoate + formate + 2 H(+). The enzyme catalyses 1,2-dihydroxy-5-(methylsulfanyl)pent-1-en-3-one + O2 = 3-(methylsulfanyl)propanoate + CO + formate + 2 H(+). It participates in amino-acid biosynthesis; L-methionine biosynthesis via salvage pathway; L-methionine from S-methyl-5-thio-alpha-D-ribose 1-phosphate: step 5/6. Functionally, catalyzes 2 different reactions between oxygen and the acireductone 1,2-dihydroxy-3-keto-5-methylthiopentene (DHK-MTPene) depending upon the metal bound in the active site. Fe-containing acireductone dioxygenase (Fe-ARD) produces formate and 2-keto-4-methylthiobutyrate (KMTB), the alpha-ketoacid precursor of methionine in the methionine recycle pathway. Ni-containing acireductone dioxygenase (Ni-ARD) produces methylthiopropionate, carbon monoxide and formate, and does not lie on the methionine recycle pathway. The protein is Acireductone dioxygenase of Ciona intestinalis (Transparent sea squirt).